Reading from the N-terminus, the 126-residue chain is Muscarinic acetylcholine receptor M4 (126 aa).

The segment at 1–90 is disordered; it reads MKQSVKKPPP…LQPRTLNPAS (90 aa). Topologically, residues 1–126 are cytoplasmic; the sequence is MKQSVKKPPP…PAGMRPAANV (126 aa). Residues 28-39 show a composition bias toward pro residues; the sequence is APPPVLPPPPRP. Residues 47 to 57 are compositionally biased toward polar residues; that stretch reads NESSSGSATQN. Residues 64–75 are compositionally biased toward low complexity; sequence TELSTTEATTPA.

Belongs to the G-protein coupled receptor 1 family. Muscarinic acetylcholine receptor subfamily. CHRM4 sub-subfamily.

The protein resides in the cell membrane. It localises to the postsynaptic cell membrane. In terms of biological role, the muscarinic acetylcholine receptor mediates various cellular responses, including inhibition of adenylate cyclase, breakdown of phosphoinositides and modulation of potassium channels through the action of G proteins. Primary transducing effect is inhibition of adenylate cyclase. May couple to multiple functional responses in cell lines. In Bos taurus (Bovine), this protein is Muscarinic acetylcholine receptor M4 (CHRM4).